Reading from the N-terminus, the 135-residue chain is Transcription antitermination protein NusB (135 aa).

This sequence belongs to the NusB family.

Functionally, involved in transcription antitermination. Required for transcription of ribosomal RNA (rRNA) genes. Binds specifically to the boxA antiterminator sequence of the ribosomal RNA (rrn) operons. The protein is Transcription antitermination protein NusB of Clostridium acetobutylicum (strain ATCC 824 / DSM 792 / JCM 1419 / IAM 19013 / LMG 5710 / NBRC 13948 / NRRL B-527 / VKM B-1787 / 2291 / W).